Reading from the N-terminus, the 355-residue chain is Ataxin-3-like protein (355 aa).

In terms of domain architecture, Josephin spans 1 to 180 (MDFIFHEKQE…DCEADQLLQI (180 aa)). Cysteine 14 functions as the Nucleophile in the catalytic mechanism. Histidine 119 functions as the Proton acceptor in the catalytic mechanism. The active site involves asparagine 134. 2 disordered regions span residues 209-230 (LEKV…EDFQ) and 253-331 (LSMQ…DISE). Over residues 215 to 228 (ESDESGTSDQDEED) the composition is skewed to acidic residues. UIM domains follow at residues 224–243 (QDEE…TNRE) and 244–258 (DEHL…MQGS). The span at 253-276 (LSMQGSSGNTSQDLPKTSCVTPAS) shows a compositional bias: polar residues. The span at 278-293 (QPKKIKEDYFEKHQQE) shows a compositional bias: basic and acidic residues.

As to expression, widely expressed.

Its subcellular location is the nucleus. It catalyses the reaction Thiol-dependent hydrolysis of ester, thioester, amide, peptide and isopeptide bonds formed by the C-terminal Gly of ubiquitin (a 76-residue protein attached to proteins as an intracellular targeting signal).. In terms of biological role, deubiquitinating enzyme that cleaves both 'Lys-48'-linked and 'Lys-63'-linked poly-ubiquitin chains (in vitro). Acts as a deubiquitinating enzyme for the transcription factor KLF5, playing a role in the regulation of KLF5 stability. The sequence is that of Ataxin-3-like protein from Homo sapiens (Human).